The chain runs to 146 residues: Hemoglobin subunit beta-2 (146 aa).

Positions 2–146 (HWTAEEKQLV…VAHALAYHYH (145 aa)) constitute a Globin domain. Residues histidine 63 and histidine 92 each coordinate heme b.

It belongs to the globin family. There are three forms of hemoglobin in Sphenodon: A, A' and D. Hb A is a tetramer of two alpha-A and two beta-1, Hb A' is a tetramer of two alpha-a and two beta-2, Hb D is a tetramer of two alpha-D and two beta-2.

In terms of biological role, involved in oxygen transport from the lung to the various peripheral tissues. The sequence is that of Hemoglobin subunit beta-2 (HBB2) from Sphenodon punctatus (Tuatara).